Reading from the N-terminus, the 1265-residue chain is Methionine synthase (1265 aa).

Positions Gln19–Val338 constitute a Hcy-binding domain. Residues Cys260, Cys323, and Cys324 each coordinate Zn(2+). The 262-residue stretch at Phe371–Glu632 folds into the Pterin-binding domain. (6S)-5,6,7,8-tetrahydrofolate is bound by residues Gly382 to Arg384, Asp449, Asn470, Asp537, Asn579, Arg585, and Arg591. Residues Gln662–Lys759 form the B12-binding N-terminal domain. Residues Glu709, Gly782 to Asp786, His785, Ser830, Thr834, and Ala886 each bind methylcob(III)alamin. The B12-binding domain occupies Gln772–Glu907. Residues Ser923–Asp1265 enclose the AdoMet activation domain. Residues Asp974, Arg1172, and Tyr1227–Phe1228 contribute to the S-adenosyl-L-methionine site. Thr1264 is subject to Phosphothreonine.

It belongs to the vitamin-B12 dependent methionine synthase family. In terms of assembly, monomer. Dimer. Forms a multiprotein complex with MMACHC, MMADHC and MTRR. Methylcob(III)alamin is required as a cofactor. It depends on Zn(2+) as a cofactor.

Its subcellular location is the cytoplasm. It carries out the reaction (6S)-5-methyl-5,6,7,8-tetrahydrofolate + L-homocysteine = (6S)-5,6,7,8-tetrahydrofolate + L-methionine. The protein operates within amino-acid biosynthesis; L-methionine biosynthesis via de novo pathway; L-methionine from L-homocysteine (MetH route): step 1/1. Its function is as follows. Catalyzes the transfer of a methyl group from methylcob(III)alamin (MeCbl) to homocysteine, yielding enzyme-bound cob(I)alamin and methionine in the cytosol. MeCbl is an active form of cobalamin (vitamin B12) used as a cofactor for methionine biosynthesis. Cob(I)alamin form is regenerated to MeCbl by a transfer of a methyl group from 5-methyltetrahydrofolate. The processing of cobalamin in the cytosol occurs in a multiprotein complex composed of at least MMACHC, MMADHC, MTRR (methionine synthase reductase) and MTR which may contribute to shuttle safely and efficiently cobalamin towards MTR in order to produce methionine. The protein is Methionine synthase (MTR) of Bos taurus (Bovine).